A 360-amino-acid chain; its full sequence is C-C chemokine receptor type 4 (360 aa).

Residues 1 to 39 (MNPTDIADTTLDESIYSNYYLYESIPKPCTKEGIKAFGE) are Extracellular-facing. Residues 40-67 (LFLPPLYSLVFVFGLLGNSVVVLVLFKY) form a helical membrane-spanning segment. At 68–77 (KRLRSMTDVY) the chain is on the cytoplasmic side. The chain crosses the membrane as a helical span at residues 78 to 98 (LLNLAISDLLFVFSLPFWGYY). Over 99-111 (AADQWVFGLGLCK) the chain is Extracellular. An intrachain disulfide couples C110 to C187. The helical transmembrane segment at 112–133 (MISWMYLVGFYSGIFFVMLMSI) threads the bilayer. The Cytoplasmic segment spans residues 134–150 (DRYLAIVHAVFSLRART). The chain crosses the membrane as a helical span at residues 151–175 (LTYGVITSLATWSVAVFASLPGFLF). Residues 176–206 (STCYTERNHTYCKTKYSLNSTTWKVLSSLEI) lie on the Extracellular side of the membrane. N183 and N194 each carry an N-linked (GlcNAc...) asparagine glycan. A helical membrane pass occupies residues 207–226 (NILGLVIPLGIMLFCYSMII). At 227–242 (RTLQHCKNEKKNKAVK) the chain is on the cytoplasmic side. The helical transmembrane segment at 243–267 (MIFAVVVLFLGFWTPYNIVLFLETL) threads the bilayer. At 268–284 (VELEVLQDCTFERYLDY) the chain is on the extracellular side. The helical transmembrane segment at 285–308 (AIQATETLAFVHCCLNPIIYFFLG) threads the bilayer. Residues 309–360 (EKFRKYILQLFKTCRGLFVLCQYCGLLQIYSADTPSSSYTQSTMDHDLHDAL) are Cytoplasmic-facing.

The protein belongs to the G-protein coupled receptor 1 family. In natural killer cells, CCL22 binding induces phosphorylation on yet undefined Ser/Thr residues, most probably by beta-adrenergic receptor kinases 1 and 2. Predominantly expressed in the thymus, in peripheral blood leukocytes, including T-cells, mostly CD4+ cells, and basophils, and in platelets; at lower levels, in the spleen and in monocytes. Detected also in macrophages, IL-2-activated natural killer cells and skin-homing memory T-cells, mostly the ones expressing the cutaneous lymphocyte antigen (CLA). Expressed in brain microvascular and coronary artery endothelial cells.

It is found in the cell membrane. Functionally, high affinity receptor for the C-C type chemokines CCL17/TARC, CCL22/MDC and CKLF isoform 1/CKLF1. The activity of this receptor is mediated by G(i) proteins which activate a phosphatidylinositol-calcium second messenger system. Can function as a chemoattractant homing receptor on circulating memory lymphocytes and as a coreceptor for some primary HIV-2 isolates. In the CNS, could mediate hippocampal-neuron survival. In Homo sapiens (Human), this protein is C-C chemokine receptor type 4 (CCR4).